The sequence spans 907 residues: MLASLIGGIFGTKNERELKRMRKIVEQINALEPTISALSDADLSAKTPEFKQRYNNGESLDKLLPEAFAVCREAAKRVMGMRHYDVQLIGGITLHEGKIAEMRTGEGKTLMGTLACYLNALSGEGVHVITVNDYLAQRDAELNRPLFEFLGLSIGTIYSMQEPAEKAAAYLADITYGTNNEFGFDYLRDNMVFSLAEKKQRGLHYAIIDEVDSILIDEARTPLIISGQSEDSSHLYTAINTIPPKLRPQKEEKVADGGHFWIDEKQRSVEMTEIGYETVEQELIQMGLLAEGESLYSATNLNLVHHVSAAIRAHFLFQRDVHYIIHDGEVVIVDEHTGRTMPGRRWSEGLHQAVEAKEGLAIQPENQTLATTTFQNYFRLYKKLSGMTGTADTEAAEMKEIYGLDVVIIPTHRPMIRNDQNDLIYLNRNGKYNAIIQEIMNIRQQGVAPILIGTATIEASEILSSKLKQAGIHHEVLNAKQHEREADIIAQAGSPNAVTIATNMAGRGTDIILGGNWKAKLAKLENPTPEDEARLKAQWEQDHEDVLQAGGLHIIGSERHESRRIDNQLRGRAGRQGDPGVSRFYLSLEDDLMRIFAGDRVVAMMRAMGLKEDEAIEHKMVSRSIENAQRKVEARNFDIRKNLLKYDDVNNEQRKIIYSQRDEILAENTLQEYVEEMHREVMQAMIANFIPPESIHDQWDVEGLENALRIDLGIELPVQEWLEQDRRLDEEGLVERISDEVIARYRQRRAQMGDESAAMLERHFVLNSLDRHWKDHLAAMDYLRQGIHLRGYAQKNPEQEYKKEAFNLFVNMLGVIKTDVVTDLSRVHIPTPEELAEMEAQQQQQAEAMKLSFEHDDVDGLTGEVTASQEALNDSATEQQTFPVPESRNAPCPCGSGLKYKQCHGKI.

ATP is bound by residues Q87, 105 to 109 (GEGKT), and D510. The Zn(2+) site is built by C892, C894, C903, and H904.

It belongs to the SecA family. Monomer and homodimer. Part of the essential Sec protein translocation apparatus which comprises SecA, SecYEG and auxiliary proteins SecDF-YajC and YidC. Zn(2+) serves as cofactor.

The protein resides in the cell inner membrane. It is found in the cytoplasm. The enzyme catalyses ATP + H2O + cellular proteinSide 1 = ADP + phosphate + cellular proteinSide 2.. Part of the Sec protein translocase complex. Interacts with the SecYEG preprotein conducting channel. Has a central role in coupling the hydrolysis of ATP to the transfer of proteins into and across the cell membrane, serving both as a receptor for the preprotein-SecB complex and as an ATP-driven molecular motor driving the stepwise translocation of polypeptide chains across the membrane. In Acinetobacter baumannii (strain ACICU), this protein is Protein translocase subunit SecA.